We begin with the raw amino-acid sequence, 85 residues long: Small ribosomal subunit protein uS17 (85 aa).

It belongs to the universal ribosomal protein uS17 family. In terms of assembly, part of the 30S ribosomal subunit.

Functionally, one of the primary rRNA binding proteins, it binds specifically to the 5'-end of 16S ribosomal RNA. This Rhodospirillum centenum (strain ATCC 51521 / SW) protein is Small ribosomal subunit protein uS17.